The primary structure comprises 289 residues: uncharacterized protein (289 aa).

A compositionally biased stretch (basic and acidic residues) spans 1-20; it reads MNPMDRQTEGQEPQHQDRQP. Positions 1–39 are disordered; that stretch reads MNPMDRQTEGQEPQHQDRQPGIESKMNPLPLSEDEDYRG. 49-73 lines the NADP(+) pocket; sequence IITGGDSGIGRAAAIAFAKEGADIS. Serine 181 is a substrate binding site. The active-site Proton acceptor is tyrosine 194.

It belongs to the short-chain dehydrogenases/reductases (SDR) family.

This is an uncharacterized protein from Bacillus subtilis (strain 168).